The primary structure comprises 1043 residues: Liprin-alpha-4 (1043 aa).

2 coiled-coil regions span residues 24-332 (EKVR…GRGG) and 426-470 (ILDA…RVTS). The segment at 498–617 (SASPPLSGRS…AKRKGIKSSI (120 aa)) is disordered. At serine 500 the chain carries Phosphoserine. A compositionally biased stretch (polar residues) spans 505–516 (GRSTPKLTSRSA). Serine 541 bears the Phosphoserine mark. Residues 544 to 555 (SREENREDKATI) are compositionally biased toward basic and acidic residues. The segment covering 590 to 602 (QDSNPSSSNSSQD) has biased composition (low complexity). SAM domains are found at residues 688–754 (WDGP…MVSL), 803–867 (NHEW…LKRL), and 891–960 (WTND…LLAL). A coiled-coil region spans residues 864–890 (LKRLNYDRKELEKRREESQHEIKDVLV).

The protein belongs to the liprin family. Liprin-alpha subfamily. Forms homodimers and heterodimers with liprins-alpha and liprins-beta. Interacts with the second PTPase domain of PTPRD, PTPRF and PTPRS. Interacts with RIMS1 and RIMS2. Interacts with GIT1 and GIT2. Interacts with GRIP1. Interacts with KIF1A.

It is found in the cytoplasm. The protein localises to the cell surface. May regulate the disassembly of focal adhesions. May localize receptor-like tyrosine phosphatases type 2A at specific sites on the plasma membrane, possibly regulating their interaction with the extracellular environment and their association with substrates. In Rattus norvegicus (Rat), this protein is Liprin-alpha-4 (Ppfia4).